The primary structure comprises 552 residues: Chaperonin GroEL (552 aa).

ATP contacts are provided by residues 30-33 (TLGP), lysine 51, 87-91 (DGTTT), glycine 415, 480-482 (NAA), and aspartate 496.

It belongs to the chaperonin (HSP60) family. In terms of assembly, forms a cylinder of 14 subunits composed of two heptameric rings stacked back-to-back. Interacts with the co-chaperonin GroES.

The protein localises to the cytoplasm. It carries out the reaction ATP + H2O + a folded polypeptide = ADP + phosphate + an unfolded polypeptide.. Together with its co-chaperonin GroES, plays an essential role in assisting protein folding. The GroEL-GroES system forms a nano-cage that allows encapsulation of the non-native substrate proteins and provides a physical environment optimized to promote and accelerate protein folding. The protein is Chaperonin GroEL of Verminephrobacter eiseniae (strain EF01-2).